Here is a 239-residue protein sequence, read N- to C-terminus: Phosphoribosylaminoimidazole-succinocarboxamide synthase (239 aa).

It belongs to the SAICAR synthetase family.

The catalysed reaction is 5-amino-1-(5-phospho-D-ribosyl)imidazole-4-carboxylate + L-aspartate + ATP = (2S)-2-[5-amino-1-(5-phospho-beta-D-ribosyl)imidazole-4-carboxamido]succinate + ADP + phosphate + 2 H(+). It participates in purine metabolism; IMP biosynthesis via de novo pathway; 5-amino-1-(5-phospho-D-ribosyl)imidazole-4-carboxamide from 5-amino-1-(5-phospho-D-ribosyl)imidazole-4-carboxylate: step 1/2. The chain is Phosphoribosylaminoimidazole-succinocarboxamide synthase from Bacillus cereus (strain G9842).